A 359-amino-acid chain; its full sequence is GalNAc-alpha-(1-&gt;4)-GalNAc-alpha-(1-&gt;3)-diNAcBac-PP-undecaprenol alpha-1,4-N-acetyl-D-galactosaminyltransferase (359 aa).

E17 is a substrate binding site. Residue Y45 participates in UDP-N-acetyl-alpha-D-galactosamine binding. 71-74 (RFKK) lines the substrate pocket. UDP-N-acetyl-alpha-D-galactosamine contacts are provided by residues H117, R190, K195, V246, and 266-274 (EGLPTVLIE). Residue R190 coordinates substrate.

This sequence belongs to the glycosyltransferase group 1 family.

The protein localises to the cell inner membrane. It carries out the reaction N-acetyl-alpha-D-galactosaminyl-(1-&gt;4)-N-acetyl-alpha-D-galactosaminyl-(1-&gt;3)-N,N'-diacetyl-alpha-D-bacillosaminyl-tri-trans,heptacis-undecaprenyl diphosphate + 3 UDP-N-acetyl-alpha-D-galactosamine = [alpha-D-GalNAc-(1-&gt;4)]4-alpha-D-GalNAc-(1-&gt;3)-alpha-D-diNAcBac-tri-trans,hepta-cis-undecaprenyl diphosphate + 3 UDP + 3 H(+). It participates in protein modification; protein glycosylation. Its function is as follows. Processive glycosyltransferase that is part of the biosynthetic pathway of the lipid-linked oligosaccharide (LLO) that serves as the glycan donor in bacterial protein N-glycosylation. Catalyzes the transfer of exactly three alpha-(1-&gt;4)-N-acetylgalactosamine (GalNAc) units to the growing LLO precursor, GalNAc-alpha-(1-&gt;4)-GalNAc-alpha-(1-&gt;3)-diNAcBac-PP-undecaprenyl. Cannot accept UDP-GlcNAc as substrate. In Campylobacter jejuni subsp. jejuni serotype O:2 (strain ATCC 700819 / NCTC 11168), this protein is GalNAc-alpha-(1-&gt;4)-GalNAc-alpha-(1-&gt;3)-diNAcBac-PP-undecaprenol alpha-1,4-N-acetyl-D-galactosaminyltransferase.